The sequence spans 74 residues: ATP synthase subunit c (74 aa).

Helical transmembrane passes span 9–29 (IAIAFMAFGMAGAALGVASIF) and 51–71 (LIGAGLAEAMGLFSFILAILL).

The protein belongs to the ATPase C chain family. In terms of assembly, F-type ATPases have 2 components, F(1) - the catalytic core - and F(0) - the membrane proton channel. F(1) has five subunits: alpha(3), beta(3), gamma(1), delta(1), epsilon(1). F(0) has three main subunits: a(1), b(2) and c(10-14). The alpha and beta chains form an alternating ring which encloses part of the gamma chain. F(1) is attached to F(0) by a central stalk formed by the gamma and epsilon chains, while a peripheral stalk is formed by the delta and b chains.

It localises to the cell inner membrane. F(1)F(0) ATP synthase produces ATP from ADP in the presence of a proton or sodium gradient. F-type ATPases consist of two structural domains, F(1) containing the extramembraneous catalytic core and F(0) containing the membrane proton channel, linked together by a central stalk and a peripheral stalk. During catalysis, ATP synthesis in the catalytic domain of F(1) is coupled via a rotary mechanism of the central stalk subunits to proton translocation. In terms of biological role, key component of the F(0) channel; it plays a direct role in translocation across the membrane. A homomeric c-ring of between 10-14 subunits forms the central stalk rotor element with the F(1) delta and epsilon subunits. The sequence is that of ATP synthase subunit c from Orientia tsutsugamushi (strain Ikeda) (Rickettsia tsutsugamushi).